We begin with the raw amino-acid sequence, 304 residues long: UTP--glucose-1-phosphate uridylyltransferase 1 (304 aa).

This sequence belongs to the UDPGP type 2 family.

It catalyses the reaction alpha-D-glucose 1-phosphate + UTP + H(+) = UDP-alpha-D-glucose + diphosphate. Its pathway is carbohydrate metabolism; nucleotide-sugar metabolism. The polypeptide is UTP--glucose-1-phosphate uridylyltransferase 1 (hasC1) (Streptococcus pyogenes serotype M3 (strain ATCC BAA-595 / MGAS315)).